The chain runs to 250 residues: Ribosomal RNA small subunit methyltransferase J (250 aa).

Residues 101–102 (RD), 117–118 (ER), 153–154 (SS), and Asp-171 each bind S-adenosyl-L-methionine.

It belongs to the methyltransferase superfamily. RsmJ family.

The protein localises to the cytoplasm. The enzyme catalyses guanosine(1516) in 16S rRNA + S-adenosyl-L-methionine = N(2)-methylguanosine(1516) in 16S rRNA + S-adenosyl-L-homocysteine + H(+). Its function is as follows. Specifically methylates the guanosine in position 1516 of 16S rRNA. The polypeptide is Ribosomal RNA small subunit methyltransferase J (Shigella boydii serotype 18 (strain CDC 3083-94 / BS512)).